Consider the following 445-residue polypeptide: Phosphoglucosamine mutase (445 aa).

Ser102 functions as the Phosphoserine intermediate in the catalytic mechanism. Mg(2+)-binding residues include Ser102, Asp241, Asp243, and Asp245. The residue at position 102 (Ser102) is a Phosphoserine.

This sequence belongs to the phosphohexose mutase family. The cofactor is Mg(2+). In terms of processing, activated by phosphorylation.

The catalysed reaction is alpha-D-glucosamine 1-phosphate = D-glucosamine 6-phosphate. In terms of biological role, catalyzes the conversion of glucosamine-6-phosphate to glucosamine-1-phosphate. This Zymomonas mobilis subsp. mobilis (strain ATCC 31821 / ZM4 / CP4) protein is Phosphoglucosamine mutase.